Reading from the N-terminus, the 92-residue chain is C-C motif chemokine 22 (92 aa).

The signal sequence occupies residues 1–24 (MATLRVPLLVALVLLAVAIQTSDA). 2 cysteine pairs are disulfide-bonded: cysteine 36-cysteine 60 and cysteine 37-cysteine 76.

It belongs to the intercrine beta (chemokine CC) family. As to expression, expressed by activated splenic B-lymphocytes and dendritic cells. Low expression in lung, thymocytes, lymph node, and unstimulated splenic cells.

The protein localises to the secreted. Its function is as follows. Chemotactic for activated T-lymphocytes. May play an important role in the collaboration of dendritic cells and B-lymphocytes with T-cells in immune responses. The polypeptide is C-C motif chemokine 22 (Ccl22) (Mus musculus (Mouse)).